The chain runs to 491 residues: Glucose-6-phosphate 1-dehydrogenase (491 aa).

Residues R49, 91-92, and K146 contribute to the NADP(+) site; that span reads DV. Residues H176, K180, E214, and D233 each contribute to the substrate site. Residue H238 is the Proton acceptor of the active site. K338 and K343 together coordinate substrate.

This sequence belongs to the glucose-6-phosphate dehydrogenase family.

It catalyses the reaction D-glucose 6-phosphate + NADP(+) = 6-phospho-D-glucono-1,5-lactone + NADPH + H(+). It functions in the pathway carbohydrate degradation; pentose phosphate pathway; D-ribulose 5-phosphate from D-glucose 6-phosphate (oxidative stage): step 1/3. Catalyzes the oxidation of glucose 6-phosphate to 6-phosphogluconolactone. This Buchnera aphidicola subsp. Acyrthosiphon pisum (strain APS) (Acyrthosiphon pisum symbiotic bacterium) protein is Glucose-6-phosphate 1-dehydrogenase.